The following is a 521-amino-acid chain: GMP synthase [glutamine-hydrolyzing] (521 aa).

The region spanning 8-203 is the Glutamine amidotransferase type-1 domain; it reads KILILDFGAQ…VVDICGCQTL (196 aa). The active-site Nucleophile is the Cys-85. Catalysis depends on residues His-177 and Glu-179. Residues 204–396 enclose the GMPS ATP-PPase domain; sequence WTAANIIDDQ…LGLPRTMVYR (193 aa). An ATP-binding site is contributed by 231 to 237; sequence SGGVDSS.

Homodimer.

It catalyses the reaction XMP + L-glutamine + ATP + H2O = GMP + L-glutamate + AMP + diphosphate + 2 H(+). Its pathway is purine metabolism; GMP biosynthesis; GMP from XMP (L-Gln route): step 1/1. In terms of biological role, catalyzes the synthesis of GMP from XMP. In Xanthomonas oryzae pv. oryzae (strain PXO99A), this protein is GMP synthase [glutamine-hydrolyzing].